The primary structure comprises 131 residues: Phosphomevalonate dehydratase small subunit (131 aa).

The Proton acceptor role is filled by Ser62.

The protein belongs to the AcnX type II small subunit family. In terms of assembly, heterodimer composed of a large subunit (PMDh-L) and a small subunit (PMDh-S).

The enzyme catalyses (R)-5-phosphomevalonate = (2E)-3-methyl-5-phosphooxypent-2-enoate + H2O. Its pathway is isoprenoid biosynthesis; isopentenyl diphosphate biosynthesis via mevalonate pathway. In terms of biological role, component of a hydro-lyase that catalyzes the dehydration of mevalonate 5-phosphate (MVA5P) to form trans-anhydromevalonate 5-phosphate (tAHMP). Involved in the archaeal mevalonate (MVA) pathway, which provides fundamental precursors for isoprenoid biosynthesis, such as isopentenyl diphosphate (IPP) and dimethylallyl diphosphate (DMAPP). The protein is Phosphomevalonate dehydratase small subunit of Methanothermobacter thermautotrophicus (strain ATCC 29096 / DSM 1053 / JCM 10044 / NBRC 100330 / Delta H) (Methanobacterium thermoautotrophicum).